The sequence spans 93 residues: Cell division topological specificity factor (93 aa).

It belongs to the MinE family.

In terms of biological role, prevents the cell division inhibition by proteins MinC and MinD at internal division sites while permitting inhibition at polar sites. This ensures cell division at the proper site by restricting the formation of a division septum at the midpoint of the long axis of the cell. The sequence is that of Cell division topological specificity factor from Syntrophus aciditrophicus (strain SB).